The chain runs to 3412 residues: Genome polyprotein (3412 aa).

The Cytoplasmic segment spans residues 1 to 104 (MSGRKAQGKT…LSSRKRRSSE (104 aa)). Residues 38–72 (PGPSRGVQGFIFFFLFNILTGKKLTTHLKRLWRML) are hydrophobic; homodimerization of capsid protein C. Positions 102 to 121 (SSEMTMMPLLILSMVILGGG) are cleaved as a propeptide — ER anchor for the capsid protein C, removed in mature form by serine protease NS3. Residues 105–125 (MTMMPLLILSMVILGGGVTLV) form a helical membrane-spanning segment. The Extracellular segment spans residues 126–244 (RKNRWLLLNV…GERQLQKIER (119 aa)). 2 N-linked (GlcNAc...) asparagine; by host glycosylation sites follow: asparagine 134 and asparagine 150. The chain crosses the membrane as a helical span at residues 245–265 (WLVRNPFFAVTALAIAYLVGN). At 266–270 (NKTQR) the chain is on the cytoplasmic side. Residues 271 to 285 (VVIALLVLAVGPAYS) form a helical membrane-spanning segment. Residues 286 to 730 (AHCIGITDRD…TVFGSAFQGL (445 aa)) lie on the Extracellular side of the membrane. 8 disulfide bridges follow: cysteine 288/cysteine 315, cysteine 345/cysteine 401, cysteine 345/cysteine 406, cysteine 359/cysteine 390, cysteine 377/cysteine 401, cysteine 377/cysteine 406, cysteine 467/cysteine 568, and cysteine 585/cysteine 615. A fusion peptide region spans residues 383 to 396 (DRGWGNGCGLFGKG). A helical membrane pass occupies residues 731 to 751 (FGGLSWITKVIMGAVLIWVGI). Over 752–757 (NTRNMT) the chain is Extracellular. The chain crosses the membrane as a helical span at residues 758-778 (MSMSMILVGVIMMFLSLGVGA). At 779-1132 (DQGCAVNFGK…LVRSWVTAGE (354 aa)) the chain is on the extracellular side. 6 disulfide bridges follow: cysteine 782–cysteine 793, cysteine 833–cysteine 921, cysteine 957–cysteine 1002, cysteine 1058–cysteine 1107, cysteine 1069–cysteine 1091, and cysteine 1090–cysteine 1094. Asparagine 908 and asparagine 986 each carry an N-linked (GlcNAc...) asparagine; by host glycan. Residues 1133-1153 (VHAVPFGLVSMMIAMEVVLRK) form a helical membrane-spanning segment. The Cytoplasmic portion of the chain corresponds to 1154-1201 (RQGPKQMLVGGIILLGAMLVGQVTMLDLVKLIVAVGLHFHEINNGGDA). The helical transmembrane segment at 1202–1222 (MYMALIASFSIRPGLLIGFGL) threads the bilayer. The Lumenal portion of the chain corresponds to 1223–1287 (RTLWSPRERL…ILPLMALLTP (65 aa)). Residues 1288–1308 (VTMYEVRMATMLFCTVVIVGV) form a helical membrane-spanning segment. Over 1309-1355 (LHQNSKDTSMQKTIPIVALTLTSYMGLTQPFLGLCAYMSTQVFGRRS) the chain is Cytoplasmic. A helical transmembrane segment spans residues 1356–1376 (IPVNEALAAAGLVGVLAGLAF). Topologically, residues 1377–1378 (QD) are lumenal. The helical transmembrane segment at 1379-1399 (MENFLGPIAVGGILMMLVSVA) threads the bilayer. The Cytoplasmic portion of the chain corresponds to 1400–1456 (GKVDGLELKKLGEVSWEEEAEISGSSSRYDVALSEQGEFKLLSEDKVPWDQIVMTSL). Positions 1407–1446 (LKKLGEVSWEEEAEISGSSSRYDVALSEQGEFKLLSEDKV) are interacts with and activates NS3 protease. The segment at residues 1457 to 1477 (ALVGAAIHPFALLLVLGGWVL) is an intramembrane region (helical). The Cytoplasmic segment spans residues 1478–2157 (HIKGARRSGD…RNALSMMPEA (680 aa)). In terms of domain architecture, Peptidase S7 spans 1485–1665 (SGDVLWDIPT…EVKEESKEEL (181 aa)). Residues histidine 1537, aspartate 1561, and serine 1622 each act as charge relay system; for serine protease NS3 activity in the active site. The 157-residue stretch at 1669–1825 (PTMLKKGMTT…HSNGEIEDVQ (157 aa)) folds into the Helicase ATP-binding domain. Residues 1673-1676 (KKGM) form an important for RNA-binding region. 1682-1689 (FHPGAGKT) contributes to the ATP binding site. The DEAH box signature appears at 1773-1776 (DEAH). A Helicase C-terminal domain is found at 1820-1997 (EIEDVQTDIP…VRGGMVAPLY (178 aa)). Lysine 1877 is subject to N6-acetyllysine; by host. The tract at residues 1942 to 1961 (AAQRRGRIGRNPNRDGDSYY) is disordered. Residues 2158-2178 (MTIVMLFILAGLLTSGMVIFF) traverse the membrane as a helical segment. The Lumenal portion of the chain corresponds to 2179–2186 (MSPKGMSR). The segment at residues 2187-2207 (MSMAMGTMAGSGYLMFLGGVK) is an intramembrane region (helical). Residues 2208–2209 (PT) lie on the Lumenal side of the membrane. Residues 2210 to 2230 (HISYVMLIFFVLMVVIIPEPG) traverse the membrane as a helical segment. The Cytoplasmic segment spans residues 2231–2241 (QQRSIQDNQVA). Residues 2242–2262 (YLIIGILTLLSVVAANELGML) traverse the membrane as a helical segment. Residues 2263 to 2293 (EKTKEDFFGKRNIATSGGTIPWSWPDLDLKP) are Lumenal-facing. An intramembrane region (helical) is located at residues 2294–2314 (GAAWTVYVGIVTMLSPMLHHW). Residues 2315–2360 (IKVEYGNLSLSGIAQSASVLSFMDKGVPFMKMNISVVILLVSGWNS) lie on the Lumenal side of the membrane. Residues 2361-2380 (ITVIPLLCGVGGAMLHWTLI) form a helical membrane-spanning segment. Topologically, residues 2381-2421 (LPGIKAQQSKLAQKRVFHGVAKNPVVDGNPTADIEEAPEMP) are cytoplasmic. The helical transmembrane segment at 2422-2442 (ALYEKKLALYLLLALSLMSVA) threads the bilayer. At 2443–2445 (MCR) the chain is on the lumenal side. The helical transmembrane segment at 2446–2466 (TPFSLAEGIVLSSAALGPLIE) threads the bilayer. Topologically, residues 2467–3411 (GNTSLLWNGP…VDADLQPGEL (945 aa)) are cytoplasmic. One can recognise an mRNA cap 0-1 NS5-type MT domain in the interval 2508–2772 (GSANGKTLGE…DVILPIGTRS (265 aa)). Serine 2563 serves as a coordination point for S-adenosyl-L-methionine. Residue serine 2563 is modified to Phosphoserine. The active-site For 2'-O-MTase activity is the lysine 2568. Residues glycine 2593, tryptophan 2594, threonine 2611, leucine 2612, aspartate 2638, and isoleucine 2639 each coordinate S-adenosyl-L-methionine. Catalysis depends on aspartate 2653, which acts as the For 2'-O-MTase activity. Isoleucine 2654 serves as a coordination point for S-adenosyl-L-methionine. Residues lysine 2689 and glutamate 2725 each act as for 2'-O-MTase activity in the active site. Tyrosine 2727 provides a ligand contact to S-adenosyl-L-methionine. A Nuclear localization signal motif is present at residues 2879 to 2912 (RKIMRVVNRWLFRHLAREKKPRLCTKEEFIAKVR). The Zn(2+) site is built by glutamate 2946, histidine 2950, cysteine 2955, and cysteine 2958. A RdRp catalytic domain is found at 3036 to 3188 (GGFYADDTAG…KPVDDRFGLA (153 aa)). Zn(2+) contacts are provided by histidine 3223, cysteine 3239, and cysteine 3358.

It in the N-terminal section; belongs to the class I-like SAM-binding methyltransferase superfamily. mRNA cap 0-1 NS5-type methyltransferase family. Homodimer. Interacts (via N-terminus) with host EXOC1 (via C-terminus); this interaction results in EXOC1 degradation through the proteasome degradation pathway. In terms of assembly, forms heterodimers with envelope protein E in the endoplasmic reticulum and Golgi. As to quaternary structure, homodimer; in the endoplasmic reticulum and Golgi. Interacts with protein prM. Interacts with non-structural protein 1. Homodimer; Homohexamer when secreted. Interacts with envelope protein E. In terms of assembly, interacts (via N-terminus) with serine protease NS3. As to quaternary structure, forms a heterodimer with serine protease NS3. May form homooligomers. Forms a heterodimer with NS2B. Interacts with non-structural protein 2A (via N-terminus). Interacts with NS4B. Interacts with unphosphorylated RNA-directed RNA polymerase NS5; this interaction stimulates RNA-directed RNA polymerase NS5 guanylyltransferase activity. NS3 interacts with host PDCD6IP; this interaction contributes to virion release. In terms of assembly, interacts with serine protease NS3. As to quaternary structure, homodimer. Interacts with host STAT2; this interaction prevents the establishment of cellular antiviral state. Interacts with serine protease NS3. Interacts with host TRIM23; this interaction leads to NS5 ubiquitination. In terms of processing, specific enzymatic cleavages in vivo yield mature proteins. The nascent capsid protein C contains a C-terminal hydrophobic domain that act as a signal sequence for translocation of prM into the lumen of the ER. Mature capsid protein C is cleaved at a site upstream of this hydrophobic domain by NS3. prM is cleaved in post-Golgi vesicles by a host furin, releasing the mature small envelope protein M, and peptide pr. Non-structural protein 2A-alpha, a C-terminally truncated form of non-structural protein 2A, results from partial cleavage by NS3. Specific enzymatic cleavages in vivo yield mature proteins peptide 2K acts as a signal sequence and is removed from the N-terminus of NS4B by the host signal peptidase in the ER lumen. Signal cleavage at the 2K-4B site requires a prior NS3 protease-mediated cleavage at the 4A-2K site. Cleaved in post-Golgi vesicles by a host furin, releasing the mature small envelope protein M, and peptide pr. This cleavage is incomplete as up to 30% of viral particles still carry uncleaved prM. Post-translationally, N-glycosylated. In terms of processing, N-glycosylated. The excreted form is glycosylated and this is required for efficient secretion of the protein from infected cells. Polyubiquitinated; ubiquitination is probably mediated by host TRIM23 and is prerequisite for NS5-STAT2 interaction. NS5 is not ISGylated or sumoylated. Post-translationally, acetylated by host KAT5. Acetylation modulates NS3 RNA-binding and unwinding activities and plays an important positive role for viral replication. In terms of processing, phosphorylated on serines residues. This phosphorylation may trigger NS5 nuclear localization.

Its subcellular location is the virion. The protein localises to the host nucleus. It localises to the host cytoplasm. The protein resides in the host perinuclear region. It is found in the secreted. Its subcellular location is the virion membrane. The protein localises to the host endoplasmic reticulum membrane. It catalyses the reaction Selective hydrolysis of -Xaa-Xaa-|-Yaa- bonds in which each of the Xaa can be either Arg or Lys and Yaa can be either Ser or Ala.. The enzyme catalyses RNA(n) + a ribonucleoside 5'-triphosphate = RNA(n+1) + diphosphate. It carries out the reaction a ribonucleoside 5'-triphosphate + H2O = a ribonucleoside 5'-diphosphate + phosphate + H(+). The catalysed reaction is ATP + H2O = ADP + phosphate + H(+). It catalyses the reaction a 5'-end (5'-triphosphoguanosine)-ribonucleoside in mRNA + S-adenosyl-L-methionine = a 5'-end (N(7)-methyl 5'-triphosphoguanosine)-ribonucleoside in mRNA + S-adenosyl-L-homocysteine. The enzyme catalyses a 5'-end (N(7)-methyl 5'-triphosphoguanosine)-ribonucleoside in mRNA + S-adenosyl-L-methionine = a 5'-end (N(7)-methyl 5'-triphosphoguanosine)-(2'-O-methyl-ribonucleoside) in mRNA + S-adenosyl-L-homocysteine + H(+). Functionally, plays a role in virus budding by binding to the cell membrane and gathering the viral RNA into a nucleocapsid that forms the core of a mature virus particle. During virus entry, may induce genome penetration into the host cytoplasm after hemifusion induced by the surface proteins. Can migrate to the cell nucleus where it modulates host functions. Its function is as follows. Inhibits RNA silencing by interfering with host Dicer. Prevents premature fusion activity of envelope proteins in trans-Golgi by binding to envelope protein E at pH6.0. After virion release in extracellular space, gets dissociated from E dimers. In terms of biological role, acts as a chaperone for envelope protein E during intracellular virion assembly by masking and inactivating envelope protein E fusion peptide. prM is the only viral peptide matured by host furin in the trans-Golgi network probably to avoid catastrophic activation of the viral fusion activity in acidic Golgi compartment prior to virion release. prM-E cleavage is inefficient, and many virions are only partially matured. These uncleaved prM would play a role in immune evasion. Functionally, may play a role in virus budding. Exerts cytotoxic effects by activating a mitochondrial apoptotic pathway through M ectodomain. May display a viroporin activity. Its function is as follows. Binds to host cell surface receptor and mediates fusion between viral and cellular membranes. Envelope protein is synthesized in the endoplasmic reticulum in the form of heterodimer with protein prM. They play a role in virion budding in the ER, and the newly formed immature particle is covered with 60 spikes composed of heterodimer between precursor prM and envelope protein E. The virion is transported to the Golgi apparatus where the low pH causes dissociation of PrM-E heterodimers and formation of E homodimers. prM-E cleavage is inefficient, and many virions are only partially matured. These uncleaved prM would play a role in immune evasion. Involved in immune evasion, pathogenesis and viral replication. Once cleaved off the polyprotein, is targeted to three destinations: the viral replication cycle, the plasma membrane and the extracellular compartment. Essential for viral replication. Required for formation of the replication complex and recruitment of other non-structural proteins to the ER-derived membrane structures. Excreted as a hexameric lipoparticle that plays a role against host immune response. Antagonizing the complement function. Binds to the host macrophages and dendritic cells. Inhibits signal transduction originating from Toll-like receptor 3 (TLR3). In terms of biological role, component of the viral RNA replication complex that functions in virion assembly and antagonizes the host immune response. Functionally, required cofactor for the serine protease function of NS3. May have membrane-destabilizing activity and form viroporins. Its function is as follows. Displays three enzymatic activities: serine protease, NTPase and RNA helicase. NS3 serine protease, in association with NS2B, performs its autocleavage and cleaves the polyprotein at dibasic sites in the cytoplasm: C-prM, NS2A-NS2B, NS2B-NS3, NS3-NS4A, NS4A-2K and NS4B-NS5. NS3 RNA helicase binds RNA and unwinds dsRNA in the 3' to 5' direction. Also plays a role in virus assembly. Regulates the ATPase activity of the NS3 helicase activity. NS4A allows NS3 helicase to conserve energy during unwinding. In terms of biological role, functions as a signal peptide for NS4B and is required for the interferon antagonism activity of the latter. Functionally, induces the formation of ER-derived membrane vesicles where the viral replication takes place. Inhibits interferon (IFN)-induced host STAT1 phosphorylation and nuclear translocation, thereby preventing the establishment of cellular antiviral state by blocking the IFN-alpha/beta pathway. Its function is as follows. Replicates the viral (+) and (-) RNA genome, and performs the capping of genomes in the cytoplasm. NS5 methylates viral RNA cap at guanine N-7 and ribose 2'-O positions. Besides its role in RNA genome replication, also prevents the establishment of cellular antiviral state by blocking the interferon-alpha/beta (IFN-alpha/beta) signaling pathway. IFN-I induces binding of NS5 to host IFN-activated transcription factor STAT2, preventing its transcriptional activity. Host TRIM23 is the E3 ligase that interacts with and polyubiquitinates NS5 to promote its binding to STAT2 and trigger IFN-I signaling inhibition. This is Genome polyprotein from Yellow fever virus (isolate Uganda/A7094A4/1948) (YFV).